Reading from the N-terminus, the 69-residue chain is Large ribosomal subunit protein bL28 (69 aa).

The protein belongs to the bacterial ribosomal protein bL28 family.

This Oleidesulfovibrio alaskensis (strain ATCC BAA-1058 / DSM 17464 / G20) (Desulfovibrio alaskensis) protein is Large ribosomal subunit protein bL28.